A 215-amino-acid polypeptide reads, in one-letter code: Pyridoxine/pyridoxamine 5'-phosphate oxidase (215 aa).

Substrate contacts are provided by residues 11–14 (RRDY) and K69. FMN contacts are provided by residues 64–69 (RVVLLK), 79–80 (YT), K86, and Q108. Substrate-binding residues include Y126, R130, and S134. Residues 143-144 (QS) and W188 each bind FMN. 194 to 196 (RLH) contacts substrate. R198 contacts FMN.

It belongs to the pyridoxamine 5'-phosphate oxidase family. As to quaternary structure, homodimer. Requires FMN as cofactor.

The catalysed reaction is pyridoxamine 5'-phosphate + O2 + H2O = pyridoxal 5'-phosphate + H2O2 + NH4(+). It carries out the reaction pyridoxine 5'-phosphate + O2 = pyridoxal 5'-phosphate + H2O2. It participates in cofactor metabolism; pyridoxal 5'-phosphate salvage; pyridoxal 5'-phosphate from pyridoxamine 5'-phosphate: step 1/1. The protein operates within cofactor metabolism; pyridoxal 5'-phosphate salvage; pyridoxal 5'-phosphate from pyridoxine 5'-phosphate: step 1/1. In terms of biological role, catalyzes the oxidation of either pyridoxine 5'-phosphate (PNP) or pyridoxamine 5'-phosphate (PMP) into pyridoxal 5'-phosphate (PLP). In Legionella pneumophila (strain Paris), this protein is Pyridoxine/pyridoxamine 5'-phosphate oxidase.